The sequence spans 366 residues: MAVLCGVCGIKEFKYKCPRCLVQTCSLECSKKHKTRDNCSGQTHDPKEYISSEALKQADDDKHERNAYVQRDYNYLTQLKRMVHVQKMDARMKNKRVLGPVGGHNSNFKKRRYDIDEDDRDSTECQRIIRRGVNCLMLPKGMQRSSQNRSKWDKTMDLFVWSVEWILCPMQEKGEKKELFKHVSHRIKETDFLVQGMGKNVFQKCCEFYRLAGTSSCIEGEDGSETKEERTQILQKSGLKFYTKTFPYNTTHIMDSKKLVELAIHEKCIGELLKNTTVIEFPTIFVAMTEADLPEGYEVLHQEPRPLEHTSTLNKFIDNAREEEDAEEDSQPTEEPVQKETQDASDSDSDSDDDYNPGLSMDFLTA.

Zn(2+)-binding residues include Cys-5, Cys-8, Cys-17, Cys-20, Cys-25, Cys-29, His-33, and Cys-39. Residues 5–39 form an HIT-type zinc finger; the sequence is CGVCGIKEFKYKCPRCLVQTCSLECSKKHKTRDNC. The segment at 318–366 is disordered; the sequence is DNAREEEDAEEDSQPTEEPVQKETQDASDSDSDSDDDYNPGLSMDFLTA. Composition is skewed to acidic residues over residues 321-332 and 343-355; these read REEEDAEEDSQP and DASD…DDDY. Ser-330 bears the Phosphoserine mark.

Belongs to the BCD1 family.

The protein resides in the nucleus. In terms of biological role, required for box C/D snoRNAs accumulation involved in snoRNA processing, snoRNA transport to the nucleolus and ribosome biogenesis. The polypeptide is Box C/D snoRNA protein 1 (BCD1) (Saccharomyces cerevisiae (strain ATCC 204508 / S288c) (Baker's yeast)).